The following is a 376-amino-acid chain: Cell adhesion molecule CEACAM18 (376 aa).

The N-terminal stretch at Met-1–Gly-30 is a signal peptide. The Extracellular portion of the chain corresponds to Gln-31 to Tyr-330. 3 N-linked (GlcNAc...) asparagine glycosylation sites follow: Asn-69, Asn-95, and Asn-110. Positions Pro-229 to Thr-314 constitute an Ig-like C2-type domain. A disulfide bond links Cys-257 and Cys-298. Residues Ile-331–Cys-351 traverse the membrane as a helical segment. Over Arg-352–Asn-376 the chain is Cytoplasmic.

The protein belongs to the immunoglobulin superfamily. CEA family. In terms of tissue distribution, mostly expressed in the small and large intestine and at lower levels also in other organs.

The protein resides in the membrane. The protein is Cell adhesion molecule CEACAM18 of Mus musculus (Mouse).